A 278-amino-acid chain; its full sequence is Nudix hydrolase 2 (278 aa).

The region spanning 110 to 242 is the Nudix hydrolase domain; the sequence is SHRVGIGAFV…ELLRYMTDIC (133 aa). The Nudix box motif lies at 147–168; sequence GVVNEGEDIHDGSVREVKEETG. A Mg(2+)-binding site is contributed by glutamate 162. Glutamate 165 acts as the Proton acceptor in catalysis. Glutamate 166 is a Mg(2+) binding site.

The protein belongs to the Nudix hydrolase family. Mg(2+) is required as a cofactor. Requires Mn(2+) as cofactor. In terms of tissue distribution, expressed in roots, stems and leaves.

It catalyses the reaction ADP-D-ribose + H2O = D-ribose 5-phosphate + AMP + 2 H(+). The catalysed reaction is NAD(+) + H2O = beta-nicotinamide D-ribonucleotide + AMP + 2 H(+). The enzyme catalyses NADH + H2O = reduced beta-nicotinamide D-ribonucleotide + AMP + 2 H(+). Its function is as follows. Probably mediates the hydrolysis of some nucleoside diphosphate derivatives. In vitro, it can use both NADH and ADP-ribose as substrates; however the relevance of such substrates in vivo is unclear. Confers tolerance to oxidative stress. This Arabidopsis thaliana (Mouse-ear cress) protein is Nudix hydrolase 2.